Reading from the N-terminus, the 171-residue chain is Disulfide bond formation protein B (171 aa).

The Cytoplasmic segment spans residues Met-1–Val-8. A helical membrane pass occupies residues Ser-9–Tyr-25. Residues Leu-26–Val-43 are Periplasmic-facing. Cysteines 35 and 38 form a disulfide. The chain crosses the membrane as a helical span at residues Gly-44 to Pro-60. Topologically, residues Val-61–Arg-67 are cytoplasmic. Residues Val-68 to Ile-85 form a helical membrane-spanning segment. Over Arg-86–Val-142 the chain is Periplasmic. Residues Cys-101 and Cys-128 are joined by a disulfide bond. Residues Trp-143 to Arg-161 form a helical membrane-spanning segment. Residues Arg-162–Lys-171 are Cytoplasmic-facing.

This sequence belongs to the DsbB family.

It is found in the cell inner membrane. Functionally, required for disulfide bond formation in some periplasmic proteins. Acts by oxidizing the DsbA protein. The chain is Disulfide bond formation protein B from Acinetobacter baylyi (strain ATCC 33305 / BD413 / ADP1).